Reading from the N-terminus, the 255-residue chain is Diphthine synthase (255 aa).

S-adenosyl-L-methionine is bound by residues leucine 9, aspartate 85, valine 88, serine 113–isoleucine 114, leucine 164, alanine 207, and histidine 232.

Belongs to the diphthine synthase family. As to quaternary structure, homodimer.

It catalyses the reaction 2-[(3S)-amino-3-carboxypropyl]-L-histidyl-[translation elongation factor 2] + 3 S-adenosyl-L-methionine = diphthine-[translation elongation factor 2] + 3 S-adenosyl-L-homocysteine + 3 H(+). Its pathway is protein modification; peptidyl-diphthamide biosynthesis. S-adenosyl-L-methionine-dependent methyltransferase that catalyzes the trimethylation of the amino group of the modified target histidine residue in translation elongation factor 2 (EF-2), to form an intermediate called diphthine. The three successive methylation reactions represent the second step of diphthamide biosynthesis. The polypeptide is Diphthine synthase (Methanococcus maripaludis (strain C7 / ATCC BAA-1331)).